We begin with the raw amino-acid sequence, 373 residues long: Centrosomal protein of 41 kDa (373 aa).

The interval Gln89–Ser137 is disordered. 2 positions are modified to phosphoserine: Ser96 and Ser99. Polar residues predominate over residues Thr106 to Asn127. A Phosphothreonine modification is found at Thr109. At Ser121 the chain carries Phosphoserine. One can recognise a Rhodanese domain in the interval Pro169–Ile266. The disordered stretch occupies residues Gln275–Lys373. Basic and acidic residues predominate over residues Asn298–Tyr312. At Arg343 the chain carries Omega-N-methylarginine. The segment covering Ser355–His366 has biased composition (polar residues).

The protein belongs to the CEP41 family. As to quaternary structure, found in a complex with TTLL6. In terms of tissue distribution, expressed in testis and fetal tissues.

Its subcellular location is the cytoplasm. The protein resides in the cytoskeleton. It is found in the microtubule organizing center. The protein localises to the centrosome. It localises to the cell projection. Its subcellular location is the cilium. The protein resides in the cilium basal body. In terms of biological role, required during ciliogenesis for tubulin glutamylation in cilium. Probably acts by participating in the transport of TTLL6, a tubulin polyglutamylase, between the basal body and the cilium. The protein is Centrosomal protein of 41 kDa (CEP41) of Homo sapiens (Human).